Here is a 195-residue protein sequence, read N- to C-terminus: Rac-like GTP-binding protein ARAC4 (195 aa).

GTP contacts are provided by residues 12–19 (GDGAVGKT), 30–37 (FPTDYVPT), 59–63 (DTAGQ), and 117–120 (TKLD). Positions 34–42 (YVPTVFDNF) match the Effector region motif. Cys192 bears the Cysteine methyl ester mark. Cys192 carries S-geranylgeranyl cysteine lipidation. A propeptide spans 193-195 (AFL) (removed in mature form).

Belongs to the small GTPase superfamily. Rho family. Interacts with SPK1, ICR1, ICR5 and PIR. In terms of tissue distribution, ubiquitous.

Its subcellular location is the cytoplasm. It localises to the cell membrane. Inactive GDP-bound Rho GTPases reside in the cytosol, are found in a complex with Rho GDP-dissociation inhibitors (Rho GDIs), and are released from the GDI protein in order to translocate to membranes upon activation. Involved in cell polarity control during the actin-dependent tip growth of root hairs, thus regulating root hair length and root hair initiation. Contributes, in a SPK1-dependent manner, to the prevention of cortical microtubules organization into parallel arrays oriented perpendicular to the axis of cell elongation to limit anisotropic cell growth during petal development. May regulate a WAVE complex that activates the Arp2/3 complex. The polypeptide is Rac-like GTP-binding protein ARAC4 (Arabidopsis thaliana (Mouse-ear cress)).